The following is a 1235-amino-acid chain: N-acetylglucosamine-1-phosphotransferase subunits alpha/beta (1235 aa).

Residues 22–42 (VCFVGVVVTIVSAFQFGEVVL) form a helical membrane-spanning segment. N-linked (GlcNAc...) asparagine glycans are attached at residues asparagine 83, asparagine 114, asparagine 148, and asparagine 179. 4 cysteine pairs are disulfide-bonded: cysteine 438–cysteine 461, cysteine 452–cysteine 468, cysteine 505–cysteine 528, and cysteine 519–cysteine 535. LNR repeat units lie at residues 438-473 (CAEG…GNTA) and 505-545 (CNQG…ELYK). Residues aspartate 449, aspartate 464, aspartate 467, aspartate 516, aspartate 531, and aspartate 534 each contribute to the Ca(2+) site. 2 N-linked (GlcNAc...) asparagine glycosylation sites follow: asparagine 614 and asparagine 729. The DMAP1-binding domain maps to 699–823 (NISLLPKEAQ…AQPTLGVTVS (125 aa)). Disordered regions lie at residues 751-783 (QART…HRSE) and 830-850 (LIVP…AEGN). Positions 837–848 (HLPKEEESDRAE) are enriched in basic and acidic residues. In terms of domain architecture, EF-hand spans 984-1019 (VQPLNISQVFHEVDTDQSGVLSDREIRTLATRIHDL). Residue asparagine 988 is glycosylated (N-linked (GlcNAc...) asparagine). Residues aspartate 997, aspartate 999, serine 1001, and glutamate 1008 each coordinate Ca(2+). An N-linked (GlcNAc...) asparagine glycan is attached at asparagine 1108. A helical transmembrane segment spans residues 1194-1214 (VLATLIIFTIFSFFAEQIIAL).

It belongs to the stealth family. In terms of assembly, hexamer of two alpha, two beta and two gamma (GNPTG) subunits; disulfide-linked. The alpha and/or the beta subunits of the enzyme constitute the catalytic subunits. Interacts with LYSET; facilitates proper localization of GNPTAB. In terms of processing, the alpha- and beta-subunits are generated by a proteolytic cleavage by MBTPS1 protease at the Lys-907-Asp-908 bond.

It localises to the golgi apparatus membrane. It catalyses the reaction N(4)-[alpha-D-mannosyl-(1-&gt;2)-alpha-D-mannosyl-(glycan)]-L-asparaginyl-[protein] + UDP-N-acetyl-alpha-D-glucosamine = N(4)-[6-(N-acetyl-alpha-D-glucosaminyl-1-phospho)-alpha-D-mannosyl-(1-&gt;2)-alpha-D-mannosyl-(glycan)]-L-asparaginyl-[protein] + UMP + H(+). Functionally, catalyzes the formation of mannose 6-phosphate (M6P) markers on high mannose type oligosaccharides in the Golgi apparatus. M6P residues are required to bind to the M6P receptors (MPR), which mediate the vesicular transport of lysosomal enzymes to the endosomal/prelysosomal compartment. In Mus musculus (Mouse), this protein is N-acetylglucosamine-1-phosphotransferase subunits alpha/beta (Gnptab).